A 299-amino-acid chain; its full sequence is Sodium/potassium-transporting ATPase subunit beta-2 (299 aa).

Topologically, residues 1 to 36 (MAALTQKKTCSQMMEEWKEFMWNPRTREFMGRTGSS) are cytoplasmic. A helical; Signal-anchor for type II membrane protein transmembrane segment spans residues 37–57 (WALILLFYVVFYAFLTAVFSL). The Extracellular portion of the chain corresponds to 58–299 (SLWVMLQTID…VIFTMKIDRL (242 aa)). N-linked (GlcNAc...) asparagine glycans are attached at residues asparagine 101 and asparagine 119. 2 disulfide bridges follow: cysteine 130-cysteine 152 and cysteine 162-cysteine 178. N-linked (GlcNAc...) asparagine glycosylation is found at asparagine 199, asparagine 226, asparagine 247, and asparagine 259. Cysteine 206 and cysteine 270 are oxidised to a cystine.

The protein belongs to the X(+)/potassium ATPases subunit beta family. As to quaternary structure, the sodium/potassium-transporting ATPase is composed of a catalytic alpha subunit, an auxiliary non-catalytic beta subunit and an additional regulatory subunit. As to expression, expressed at a high level in bladder epithelial cells and eye and at a trace level in kidney; it is not detectable in significant amounts in the stomach, colon and small intestine.

It localises to the cell membrane. Its function is as follows. This is the non-catalytic component of the active enzyme, which catalyzes the hydrolysis of ATP coupled with the exchange of Na(+) and K(+) ions across the plasma membrane. The exact function of this glycoprotein is not known. Some specific sequence of the beta subunit can modulate the activation of the Na,K-pump by extracellular potassium ions. This Rhinella marina (Cane toad) protein is Sodium/potassium-transporting ATPase subunit beta-2.